A 461-amino-acid chain; its full sequence is Probable metabolite transport protein CsbC (461 aa).

Topologically, residues 1–14 (MKKDTRKYMIYFFG) are cytoplasmic. The helical transmembrane segment at 15–35 (ALGGLLYGYDTGVISGALLFI) threads the bilayer. Topologically, residues 36–38 (NND) are extracellular. A helical transmembrane segment spans residues 39-59 (IPLTTLTEGLVVSMLLLGAIF). Residues 60-76 (GSALSGTCSDRWGRRKV) are Cytoplasmic-facing. A helical transmembrane segment spans residues 77–97 (VFVLSIIFIIGALACAFSQTI). Over 98-104 (GMLIASR) the chain is Extracellular. The helical transmembrane segment at 105 to 125 (VILGLAVGGSTALVPVYLSEM) threads the bilayer. The Cytoplasmic segment spans residues 126 to 139 (APTKIRGTLGTMNN). A helical transmembrane segment spans residues 140 to 160 (LMIVTGILLAYIVNYLFTPFE). Topologically, residues 161 to 163 (AWR) are extracellular. The helical transmembrane segment at 164–184 (WMVGLAAVPAVLLLIGIAFMP) threads the bilayer. Residues 185–241 (ESPRWLVKRGSEEEARRIMNITHDPKDIEMELAEMKQGEAEKKETTLGVLKAKWIRP) are Cytoplasmic-facing. A helical transmembrane segment spans residues 242–262 (MLLIGVGLAIFQQAVGINTVI). Over 263 to 280 (YYAPTIFTKAGLGTSASA) the chain is Extracellular. Residues 281-301 (LGTMGIGILNVIMCITAMILI) form a helical membrane-spanning segment. Residues 302 to 308 (DRVGRKK) are Cytoplasmic-facing. Residues 309 to 329 (LLIWGSVGITLSLAALSGVLL) traverse the membrane as a helical segment. The Extracellular segment spans residues 330–341 (TLGLSASTAWMT). A helical membrane pass occupies residues 342–362 (VVFLGVYIVFYQATWGPVVWV). Residues 363–378 (LMPELFPSKARGAATG) lie on the Cytoplasmic side of the membrane. Residues 379-399 (FTTLVLSAANLIVSLVFPLML) traverse the membrane as a helical segment. Residues 400–402 (SAM) are Extracellular-facing. A helical membrane pass occupies residues 403 to 423 (GIAWVFMVFSVICLLSFFFAF). Residues 424–461 (YMVPETKGKSLEEIEASLKKRFKKKKSTQNQVLNERTL) lie on the Cytoplasmic side of the membrane.

The protein belongs to the major facilitator superfamily. Sugar transporter (TC 2.A.1.1) family.

Its subcellular location is the cell membrane. Its function is as follows. Could serve either a nutritional or an osmotic protection function. This is Probable metabolite transport protein CsbC (csbC) from Bacillus subtilis (strain 168).